The primary structure comprises 513 residues: Zinc finger CCCH-type with G patch domain-containing protein (513 aa).

The C3H1-type zinc finger occupies 155–178 (PCSYYLEGECRFDEAKCRFSHGAL). 2 stretches are compositionally biased toward acidic residues: residues 252-261 (DQDEDDELSS) and 273-283 (SDEAESDMDDL). The tract at residues 252–283 (DQDEDDELSSEESTSSMRDASSDEAESDMDDL) is disordered. One can recognise a G-patch domain in the interval 312 to 358 (TRGIGSKLMEKMGYIHGTGLGSDGRGIVTPVSAQILPQGRSLDACME). The span at 477-495 (QVQMQSHKQELATLQAQER) shows a compositional bias: polar residues. The tract at residues 477–513 (QVQMQSHKQELATLQAQERSLSKEQQTRKSKNKMFEF) is disordered. Positions 496 to 513 (SLSKEQQTRKSKNKMFEF) are enriched in basic and acidic residues.

It localises to the nucleus. Functionally, transcription repressor. This chain is Zinc finger CCCH-type with G patch domain-containing protein, found in Drosophila simulans (Fruit fly).